A 105-amino-acid polypeptide reads, in one-letter code: MKNKIKIRLKSFDHRSLDQATKEIVSAVKRTFANINGPIPLPKKIGRFTVNRSPHVHKKSREQFEIRKHKRLLVIGDPNPAVVDALSKVDLAAGVDVVIELESGE.

Belongs to the universal ribosomal protein uS10 family. Part of the 30S ribosomal subunit.

In terms of biological role, involved in the binding of tRNA to the ribosomes. The chain is Small ribosomal subunit protein uS10 from Rickettsia conorii (strain ATCC VR-613 / Malish 7).